The sequence spans 242 residues: Octanoyltransferase (242 aa).

Positions 31–206 constitute a BPL/LPL catalytic domain; it reads SQTTDEIWFL…LFLKNFGYNQ (176 aa). Substrate-binding positions include 70-77, 137-139, and 150-152; these read RGGQVTYH, SIG, and GLA. Residue C168 is the Acyl-thioester intermediate of the active site.

This sequence belongs to the LipB family.

Its subcellular location is the cytoplasm. It carries out the reaction octanoyl-[ACP] + L-lysyl-[protein] = N(6)-octanoyl-L-lysyl-[protein] + holo-[ACP] + H(+). The protein operates within protein modification; protein lipoylation via endogenous pathway; protein N(6)-(lipoyl)lysine from octanoyl-[acyl-carrier-protein]: step 1/2. Its function is as follows. Catalyzes the transfer of endogenously produced octanoic acid from octanoyl-acyl-carrier-protein onto the lipoyl domains of lipoate-dependent enzymes. Lipoyl-ACP can also act as a substrate although octanoyl-ACP is likely to be the physiological substrate. This is Octanoyltransferase from Coxiella burnetii (strain CbuK_Q154) (Coxiella burnetii (strain Q154)).